Reading from the N-terminus, the 132-residue chain is Fatty acid-binding protein, liver (132 aa).

Residue Val-1 is modified to N-acetylvaline. Residue Tyr-19 is modified to Phosphotyrosine; by Tyr-kinases.

It belongs to the calycin superfamily. Fatty-acid binding protein (FABP) family.

It localises to the cytoplasm. Functionally, FABPs are thought to play a role in the intracellular transport of long-chain fatty acids and their acyl-CoA esters. In Ginglymostoma cirratum (Nurse shark), this protein is Fatty acid-binding protein, liver.